Reading from the N-terminus, the 378-residue chain is Chaperone protein DnaJ (378 aa).

One can recognise a J domain in the interval 6–70 (DYYDVLGVSR…QKRQQYDQFG (65 aa)). A CR-type zinc finger spans residues 137-219 (GKTSEISYSR…CHGKGVKTQK (83 aa)). Zn(2+) contacts are provided by Cys150, Cys153, Cys167, Cys170, Cys193, Cys196, Cys207, and Cys210. CXXCXGXG motif repeat units follow at residues 150–157 (CEVCKGSG), 167–174 (CDKCGGSG), 193–200 (CDKCAGSG), and 207–214 (CHNCHGKG).

Belongs to the DnaJ family. As to quaternary structure, homodimer. Requires Zn(2+) as cofactor.

The protein resides in the cytoplasm. Participates actively in the response to hyperosmotic and heat shock by preventing the aggregation of stress-denatured proteins and by disaggregating proteins, also in an autonomous, DnaK-independent fashion. Unfolded proteins bind initially to DnaJ; upon interaction with the DnaJ-bound protein, DnaK hydrolyzes its bound ATP, resulting in the formation of a stable complex. GrpE releases ADP from DnaK; ATP binding to DnaK triggers the release of the substrate protein, thus completing the reaction cycle. Several rounds of ATP-dependent interactions between DnaJ, DnaK and GrpE are required for fully efficient folding. Also involved, together with DnaK and GrpE, in the DNA replication of plasmids through activation of initiation proteins. The protein is Chaperone protein DnaJ of Lactobacillus delbrueckii subsp. bulgaricus (strain ATCC BAA-365 / Lb-18).